A 125-amino-acid polypeptide reads, in one-letter code: UPF0102 protein mlr4633 (125 aa).

It belongs to the UPF0102 family.

This chain is UPF0102 protein mlr4633, found in Mesorhizobium japonicum (strain LMG 29417 / CECT 9101 / MAFF 303099) (Mesorhizobium loti (strain MAFF 303099)).